The sequence spans 357 residues: Mannonate dehydratase (357 aa).

It belongs to the mannonate dehydratase family. Requires Fe(2+) as cofactor. It depends on Mn(2+) as a cofactor.

It carries out the reaction D-mannonate = 2-dehydro-3-deoxy-D-gluconate + H2O. Its pathway is carbohydrate metabolism; pentose and glucuronate interconversion. Catalyzes the dehydration of D-mannonate. The polypeptide is Mannonate dehydratase (Enterococcus faecalis (strain ATCC 700802 / V583)).